A 161-amino-acid chain; its full sequence is Small ribosomal subunit protein uS9 (161 aa).

The span at 1–21 (MATLQSLADLNRANTQTSNPE) shows a compositional bias: polar residues. Positions 1-25 (MATLQSLADLNRANTQTSNPENEAP) are disordered.

The protein belongs to the universal ribosomal protein uS9 family.

This Methylorubrum populi (strain ATCC BAA-705 / NCIMB 13946 / BJ001) (Methylobacterium populi) protein is Small ribosomal subunit protein uS9.